The following is a 430-amino-acid chain: MIDSLDLVIDTIVAREVLDSRGNPTVEAEVLLEGGAMGRAIVPSGASTGAHEAHELRDGGDRYMGKGVGQAVNHIEERIATALCGLSALDQAAVDAAMLELDGSDNKSNLGANAILAVSMATARAAANGLGIPLYRYLGGPMANLLPVPLMNVINGGAHAANSLDFQEFMLVPHGAPSFREALRMGTEVFHTLKKLLSDKGMSTAVGDEGGFAPDLGNVEAGEILVEAISKAGYKPGEQISLALDVASTEFFENGRYAFDGGSYTSAEMVGQLEQLVEKFPIVSIEDGLAEDDWDGWKLLTERLGGKVQLVGDDLFVTNTKRLQQGIDSATANSILIKVNQIGSLTETLQAIDLAGRSGYTSVISHRSGETEDTTIADLSVATRAGQIKTGSLSRSERVAKYNQLLRIEDELGSQAVYAGAVGQGPRGKA.

Gln-167 provides a ligand contact to (2R)-2-phosphoglycerate. Glu-209 serves as the catalytic Proton donor. Mg(2+) contacts are provided by Asp-245, Glu-286, and Asp-313. (2R)-2-phosphoglycerate is bound by residues Lys-338, Arg-367, Ser-368, and Lys-389. Lys-338 acts as the Proton acceptor in catalysis.

The protein belongs to the enolase family. Requires Mg(2+) as cofactor.

It localises to the cytoplasm. The protein resides in the secreted. It is found in the cell surface. The enzyme catalyses (2R)-2-phosphoglycerate = phosphoenolpyruvate + H2O. It functions in the pathway carbohydrate degradation; glycolysis; pyruvate from D-glyceraldehyde 3-phosphate: step 4/5. Its function is as follows. Catalyzes the reversible conversion of 2-phosphoglycerate (2-PG) into phosphoenolpyruvate (PEP). It is essential for the degradation of carbohydrates via glycolysis. This Synechococcus sp. (strain CC9605) protein is Enolase.